The primary structure comprises 259 residues: Ubiquinol-cytochrome c reductase complex assembly factor 1 (259 aa).

This sequence belongs to the CBP3 family. As to quaternary structure, interacts with sloth1; the interaction is probably involved in the assembly and stability of the mitochondrial ubiquinol-cytochrome c reductase complex.

Its subcellular location is the mitochondrion inner membrane. Its function is as follows. Required for the assembly of the ubiquinol-cytochrome c reductase complex (mitochondrial respiratory chain complex III or cytochrome b-c1 complex). May be involved in cytochrome b translation and/or stability. The chain is Ubiquinol-cytochrome c reductase complex assembly factor 1 from Drosophila melanogaster (Fruit fly).